Consider the following 786-residue polypeptide: MSFSRALLWARLPAGRQAGHRAAICSALRPHFGPFPGVLGQVSVLATASSSASGGSKIPNTSLFVPLTVKPQGPSADGDVGAELTRPLDKNEVKKVLDKFYKRKEIQKLGADYGLDARLFHQAFISFRNYIMQSHSLDVDIHIVLNDICFGAAHADDLFPFFLRHAKQIFPVLDCKDDLRKISDLRIPPNWYPDARAMQRKIIFHSGPTNSGKTYHAIQKYFSAKSGVYCGPLKLLAHEIFEKSNAAGVPCDLVTGEERVTVQPNGKQASHVSCTVEMCSVTTPYEVAVIDEIQMIRDPARGWAWTRALLGLCAEEVHLCGEPAAIDLVMELMYTTGEEVEVRDYKRLTPISVLDHALESLDNLRPGDCIVCFSKNDIYSVSRQIEIRGLESAVIYGSLPPGTKLAQAKKFNDPNDPCKILVATDAIGMGLNLSIRRIIFYSLIKPSINEKGERELEPITTSQALQIAGRAGRFSSRFKEGEVTTMNHEDLSLLKEILKRPVDPIRAAGLHPTAEQIEMFAYHLPDATLSNLIDIFVDFSQVDGQYFVCNMDDFKFSAELIQHIPLSLRVRYVFCTAPINKKQPFVCSSLLQFARQYSRNEPLTFAWLRRYIKWPLLPPKNIKDLMDLEAVHDVLDLYLWLSYRFMDMFPDASLIRDLQKELDGIIQDGVHNITKLIKMSETHKLLNLEGFPSGSQSRLSGTLKSQARRTRGTKALGSKATEPPSPDAGELSLASRLVQQGLLTPDMLKQLEKEWMTQQTEHNKEKTESGTHPKGTRRKKKEPDSD.

The N-terminal 22 residues, 1-22 (MSFSRALLWARLPAGRQAGHRA), are a transit peptide targeting the mitochondrion. An N6-acetyllysine modification is found at K99. A Helicase ATP-binding domain is found at 194–334 (DARAMQRKII…AIDLVMELMY (141 aa)). 207–214 (GPTNSGKT) serves as a coordination point for ATP. At K220 the chain carries N6-acetyllysine. The Helicase C-terminal domain occupies 353–518 (VLDHALESLD…GLHPTAEQIE (166 aa)). Positions 650-786 (PDASLIRDLQ…RRKKKEPDSD (137 aa)) are interaction with LAMTOR5, important for protein stability. Disordered regions lie at residues 690-730 (GFPS…DAGE) and 749-786 (KQLEKEWMTQQTEHNKEKTESGTHPKGTRRKKKEPDSD). Polar residues predominate over residues 693–705 (SGSQSRLSGTLKS). S725 is modified (phosphoserine). Over residues 749–771 (KQLEKEWMTQQTEHNKEKTESGT) the composition is skewed to basic and acidic residues.

The protein belongs to the helicase family. In terms of assembly, homodimer; in free form. Component of the mitochondrial degradosome (mtEXO) complex which is a heteropentamer containing 2 copies of SUPV3L1 and 3 copies of PNPT1. As part of mitochondrial degradosome complex, interacts with GRSF1 in a RNA-dependent manner; the interaction enhances the activity of the complex. Interacts with LAMTOR5/HBXIP, WRN and BLM. Mg(2+) is required as a cofactor. Mn(2+) serves as cofactor. In terms of tissue distribution, broadly expressed.

The protein localises to the nucleus. Its subcellular location is the mitochondrion matrix. The protein resides in the mitochondrion nucleoid. The enzyme catalyses ATP + H2O = ADP + phosphate + H(+). Helicase activity toward DNA substrate is inhibited by micromolar concentrations of 5,6-dichloro-1-(beta-D-ribofuranosyl)benzotriazole (DRBT) and 4,5,6,7-tetrabromobenzotriazole (TBBT). Helicase activity toward RNA substrate is inhibited by elevated concentrations of TBBT. Inhibited by some ring-expanded nucleoside analogs. Its function is as follows. Major helicase player in mitochondrial RNA metabolism. Component of the mitochondrial degradosome (mtEXO) complex, that degrades 3' overhang double-stranded RNA with a 3'-to-5' directionality in an ATP-dependent manner. Involved in the degradation of non-coding mitochondrial transcripts (MT-ncRNA) and tRNA-like molecules. ATPase and ATP-dependent multisubstrate helicase, able to unwind double-stranded (ds) DNA and RNA, and RNA/DNA heteroduplexes in the 5'-to-3' direction. Plays a role in the RNA surveillance system in mitochondria; regulates the stability of mature mRNAs, the removal of aberrantly formed mRNAs and the rapid degradation of non coding processing intermediates. Also implicated in recombination and chromatin maintenance pathways. May protect cells from apoptosis. Associates with mitochondrial DNA. In Homo sapiens (Human), this protein is ATP-dependent RNA helicase SUPV3L1, mitochondrial (SUPV3L1).